Reading from the N-terminus, the 285-residue chain is Thrombin-like enzyme TLBm (285 aa).

The Peptidase S1 domain occupies valine 1 to alanine 273. Disulfide bonds link cysteine 7-cysteine 181, cysteine 30-cysteine 46, cysteine 94-cysteine 284, cysteine 156-cysteine 234, cysteine 192-cysteine 209, and cysteine 224-cysteine 249. Catalysis depends on charge relay system residues histidine 45 and aspartate 113. Serine 228 functions as the Charge relay system in the catalytic mechanism.

This sequence belongs to the peptidase S1 family. Snake venom subfamily. Monomer. Post-translationally, homologous thrombin-like enzymes are N-glycosylated. This enzyme does not contain the consensus glycosylation sites, suggesting it is not glycosylated. Expressed by the venom gland.

It localises to the secreted. With respect to regulation, inhibited by PMSF, disodium-EDTA, S(Dm) and soybean trypsin inhibitor (SBTI). SBTI and S(Dm) (the anti-hemorrhagic protein) acts as a non-competitive inhibitors that decrease the enzymatic activity. In terms of biological role, thrombin-like enzyme that induces the formation of fibrin clot. Cleaves the Aalpha-chain of fibrinogen (FGA) with higher activity than the Bbeta-chain (FGB). Induces platelet aggregation in both platelet-rich plasma and in washed platelet preparations. This aggregation is strongly inhibited by preincubation of the enzyme with PMSF. This chain is Thrombin-like enzyme TLBm, found in Bothrops marajoensis (Marajo lancehead).